A 343-amino-acid chain; its full sequence is Ribosomal RNA small subunit methyltransferase C (343 aa).

Belongs to the methyltransferase superfamily. RsmC family. In terms of assembly, monomer.

The protein localises to the cytoplasm. The catalysed reaction is guanosine(1207) in 16S rRNA + S-adenosyl-L-methionine = N(2)-methylguanosine(1207) in 16S rRNA + S-adenosyl-L-homocysteine + H(+). Its function is as follows. Specifically methylates the guanine in position 1207 of 16S rRNA in the 30S particle. In Escherichia coli O157:H7, this protein is Ribosomal RNA small subunit methyltransferase C.